We begin with the raw amino-acid sequence, 184 residues long: Probable RNA 2'-phosphotransferase (184 aa).

It belongs to the KptA/TPT1 family.

Functionally, removes the 2'-phosphate from RNA via an intermediate in which the phosphate is ADP-ribosylated by NAD followed by a presumed transesterification to release the RNA and generate ADP-ribose 1''-2''-cyclic phosphate (APPR&gt;P). May function as an ADP-ribosylase. The chain is Probable RNA 2'-phosphotransferase from Escherichia coli (strain 55989 / EAEC).